We begin with the raw amino-acid sequence, 310 residues long: Homoserine kinase (310 aa).

91 to 101 contributes to the ATP binding site; that stretch reads PIGSGLGSSAC.

The protein belongs to the GHMP kinase family. Homoserine kinase subfamily.

It is found in the cytoplasm. It catalyses the reaction L-homoserine + ATP = O-phospho-L-homoserine + ADP + H(+). It functions in the pathway amino-acid biosynthesis; L-threonine biosynthesis; L-threonine from L-aspartate: step 4/5. Its function is as follows. Catalyzes the ATP-dependent phosphorylation of L-homoserine to L-homoserine phosphate. The protein is Homoserine kinase of Escherichia coli (strain SMS-3-5 / SECEC).